The chain runs to 141 residues: Large-conductance mechanosensitive channel (141 aa).

The next 2 helical transmembrane spans lie at 16–36 and 83–103; these read VIDL…VDSL and GAFI…FVAI.

Belongs to the MscL family. Homopentamer.

The protein localises to the cell inner membrane. Channel that opens in response to stretch forces in the membrane lipid bilayer. May participate in the regulation of osmotic pressure changes within the cell. This Azoarcus sp. (strain BH72) protein is Large-conductance mechanosensitive channel.